The following is a 506-amino-acid chain: NAD(P)H-quinone oxidoreductase subunit 2 (506 aa).

Transmembrane regions (helical) follow at residues 14–34 (AIIP…VDLA), 42–62 (WAPI…ALQW), 79–99 (LAIA…LISW), 108–128 (PIGE…LLCG), 132–152 (LISI…LSGY), 167–187 (LLVG…LYGL), 206–226 (FITS…IAAV), 240–260 (PTPV…AFAI), 276–296 (LLFT…ALAQ), 302–322 (MLAY…VSGT), 330–350 (VLYL…VILF), 374–394 (LGLS…GFFG), and 409–429 (LLVI…ISVI).

This sequence belongs to the complex I subunit 2 family. In terms of assembly, NDH-1 can be composed of about 15 different subunits; different subcomplexes with different compositions have been identified which probably have different functions.

The protein localises to the cellular thylakoid membrane. The catalysed reaction is a plastoquinone + NADH + (n+1) H(+)(in) = a plastoquinol + NAD(+) + n H(+)(out). It carries out the reaction a plastoquinone + NADPH + (n+1) H(+)(in) = a plastoquinol + NADP(+) + n H(+)(out). NDH-1 shuttles electrons from an unknown electron donor, via FMN and iron-sulfur (Fe-S) centers, to quinones in the respiratory and/or the photosynthetic chain. The immediate electron acceptor for the enzyme in this species is believed to be plastoquinone. Couples the redox reaction to proton translocation, and thus conserves the redox energy in a proton gradient. Cyanobacterial NDH-1 also plays a role in inorganic carbon-concentration. The polypeptide is NAD(P)H-quinone oxidoreductase subunit 2 (Prochlorococcus marinus (strain MIT 9312)).